Here is a 554-residue protein sequence, read N- to C-terminus: Malate synthase 1 (554 aa).

The active-site Proton acceptor is the Arg-177. Asp-457 serves as the catalytic Proton donor. Residues 552 to 554 (SKL) carry the SKL peroxisome targeting motif motif.

It belongs to the malate synthase family. As to quaternary structure, interacts with PEX9.

Its subcellular location is the peroxisome matrix. It catalyses the reaction glyoxylate + acetyl-CoA + H2O = (S)-malate + CoA + H(+). It participates in carbohydrate metabolism; glyoxylate cycle; (S)-malate from isocitrate: step 2/2. Functionally, malate synthase which takes part in the glyoxylate cycle. MLS1 activity is essential for cells to grow on oleic acid as a sole carbon source. Two steps of the glyoxylate cycle take place in the cytosol, the splitting of isocitrate into succinate and glyoxylate, and the dehydrogenation of malate to oxaloacetate. However, the formation of malate from glyoxylate and acetyl-CoA undertaken MLS1, occurs in the peroxisomes when cells are grown on oleic acid. The source of acetyl-CoA being either peroxisomal when breaking down fatty acids, or cytosolic when extra-cellular two-carbon substrates are used, therefore, although not strictly essential, the peroxisomal localization of MLS1 appears to be advantageous for cells growing on oleic acid, in that acetyl-CoA production and utilization are thereby intimately compartmentalized together to increase efficiency. The chain is Malate synthase 1 from Saccharomyces cerevisiae (strain ATCC 204508 / S288c) (Baker's yeast).